A 121-amino-acid polypeptide reads, in one-letter code: Fluoride-specific ion channel FluC 1 (121 aa).

Transmembrane regions (helical) follow at residues 3-23 (YVYI…ISFL), 35-55 (IANL…IAFF), 64-84 (AITT…LELI), and 92-112 (FITL…LCYV). Na(+) is bound by residues G71 and T74.

Belongs to the fluoride channel Fluc/FEX (TC 1.A.43) family.

Its subcellular location is the cell membrane. It carries out the reaction fluoride(in) = fluoride(out). With respect to regulation, na(+) is not transported, but it plays an essential structural role and its presence is essential for fluoride channel function. Functionally, fluoride-specific ion channel. Important for reducing fluoride concentration in the cell, thus reducing its toxicity. In Staphylococcus aureus (strain NCTC 8325 / PS 47), this protein is Fluoride-specific ion channel FluC 1.